The sequence spans 481 residues: Deoxyribodipyrimidine photo-lyase (481 aa).

The region spanning 1–136 (MQLFWHRRDL…AHAQFHDAVH (136 aa)) is the Photolyase/cryptochrome alpha/beta domain. Tyr-228 lines the FAD pocket. Arg-232 serves as a coordination point for DNA. 240 to 244 (TSRLS) is an FAD binding site. Interaction with DNA stretches follow at residues 283-290 (QLAWREFY) and 349-350 (NR). An FAD-binding site is contributed by 380–382 (DHD). Gln-412 is a binding site for DNA.

The protein belongs to the DNA photolyase class-1 family. In terms of assembly, monomer. Requires FAD as cofactor. The cofactor is coenzyme F420-(gamma-Glu)n.

It catalyses the reaction cyclobutadipyrimidine (in DNA) = 2 pyrimidine residues (in DNA).. In terms of biological role, involved in repair of UV radiation-induced DNA damage. Catalyzes the light-dependent monomerization (300-600 nm) of cyclobutyl pyrimidine dimers (in cis-syn configuration), which are formed between adjacent bases on the same DNA strand upon exposure to ultraviolet radiation. This chain is Deoxyribodipyrimidine photo-lyase (phr), found in Halobacterium salinarum (strain ATCC 700922 / JCM 11081 / NRC-1) (Halobacterium halobium).